The following is a 413-amino-acid chain: CCA-adding enzyme (413 aa).

ATP contacts are provided by Ser42 and Lys45. Positions 42 and 45 each coordinate CTP. Residues Asp54, Asp56, and Asp107 each contribute to the Mg(2+) site. Residues His130, Lys150, and Tyr159 each coordinate ATP. His130, Lys150, and Tyr159 together coordinate CTP.

This sequence belongs to the tRNA nucleotidyltransferase/poly(A) polymerase family. Archaeal CCA-adding enzyme subfamily. As to quaternary structure, homodimer. Requires Mg(2+) as cofactor.

The catalysed reaction is a tRNA precursor + 2 CTP + ATP = a tRNA with a 3' CCA end + 3 diphosphate. It carries out the reaction a tRNA with a 3' CCA end + 2 CTP + ATP = a tRNA with a 3' CCACCA end + 3 diphosphate. In terms of biological role, catalyzes the addition and repair of the essential 3'-terminal CCA sequence in tRNAs without using a nucleic acid template. Adds these three nucleotides in the order of C, C, and A to the tRNA nucleotide-73, using CTP and ATP as substrates and producing inorganic pyrophosphate. tRNA 3'-terminal CCA addition is required both for tRNA processing and repair. Also involved in tRNA surveillance by mediating tandem CCA addition to generate a CCACCA at the 3' terminus of unstable tRNAs. While stable tRNAs receive only 3'-terminal CCA, unstable tRNAs are marked with CCACCA and rapidly degraded. This is CCA-adding enzyme from Sulfurisphaera tokodaii (strain DSM 16993 / JCM 10545 / NBRC 100140 / 7) (Sulfolobus tokodaii).